Consider the following 162-residue polypeptide: NADH-ubiquinone oxidoreductase 24 kDa subunit homolog C11E3.12, mitochondrial (162 aa).

Residues Cys88, Cys93, Cys125, and Cys129 each contribute to the [2Fe-2S] cluster site.

Belongs to the complex I 24 kDa subunit family. The cofactor is [2Fe-2S] cluster.

It localises to the mitochondrion. In Schizosaccharomyces pombe (strain 972 / ATCC 24843) (Fission yeast), this protein is NADH-ubiquinone oxidoreductase 24 kDa subunit homolog C11E3.12, mitochondrial.